We begin with the raw amino-acid sequence, 155 residues long: Short-chain-enoyl-CoA hydratase (155 aa).

Belongs to the enoyl-CoA hydratase/isomerase family.

The enzyme catalyses a short-chain (3S)-3-hydroxyacyl-CoA = a short-chain (2E)-enoyl-CoA + H2O. The protein operates within lipid metabolism; butanoate metabolism. In Clostridioides difficile (Peptoclostridium difficile), this protein is Short-chain-enoyl-CoA hydratase (crt).